We begin with the raw amino-acid sequence, 190 residues long: Threonylcarbamoyl-AMP synthase (190 aa).

One can recognise a YrdC-like domain in the interval 7 to 190; that stretch reads GDAIAAAIDV…ALTGELFRQG (184 aa).

It belongs to the SUA5 family. TsaC subfamily.

Its subcellular location is the cytoplasm. It catalyses the reaction L-threonine + hydrogencarbonate + ATP = L-threonylcarbamoyladenylate + diphosphate + H2O. Required for the formation of a threonylcarbamoyl group on adenosine at position 37 (t(6)A37) in tRNAs that read codons beginning with adenine. Catalyzes the conversion of L-threonine, HCO(3)(-)/CO(2) and ATP to give threonylcarbamoyl-AMP (TC-AMP) as the acyladenylate intermediate, with the release of diphosphate. This is Threonylcarbamoyl-AMP synthase from Escherichia coli O6:H1 (strain CFT073 / ATCC 700928 / UPEC).